Consider the following 94-residue polypeptide: Potassium channel protein kcv (94 aa).

A helical transmembrane segment spans residues 14 to 34 (FMIHLFILAMFVMIYKFFPGG). An N-linked (GlcNAc...) asparagine; by host glycan is attached at Asn-38. The chain crosses the membrane as a helical span at residues 74-94 (TGAKLCTIAHIVTVFFIVLTL).

The protein belongs to the two pore domain potassium channel (TC 1.A.1.12) family.

It is found in the membrane. In terms of biological role, potassium-selective channel essential in the virus replication cycle. May be involved in preventing multiple infections (Potential). The chain is Potassium channel protein kcv (A250R) from Paramecium bursaria Chlorella virus 1 (PBCV-1).